Here is a 424-residue protein sequence, read N- to C-terminus: Tyrosine--tRNA ligase (424 aa).

L-tyrosine is bound at residue Tyr-37. The 'HIGH' region motif lies at 42–51 (PTADSLHLGH). The L-tyrosine site is built by Tyr-175 and Gln-179. The short motif at 235-239 (KFGKT) is the 'KMSKS' region element. Residue Lys-238 participates in ATP binding. The 58-residue stretch at 357–414 (ADLQQALVNAELVPSRGQARTMISSNAVAINGEKQSDPEYAFTDADRLFGRYTLLRRG) folds into the S4 RNA-binding domain.

This sequence belongs to the class-I aminoacyl-tRNA synthetase family. TyrS type 1 subfamily. In terms of assembly, homodimer.

The protein localises to the cytoplasm. It catalyses the reaction tRNA(Tyr) + L-tyrosine + ATP = L-tyrosyl-tRNA(Tyr) + AMP + diphosphate + H(+). Its function is as follows. Catalyzes the attachment of tyrosine to tRNA(Tyr) in a two-step reaction: tyrosine is first activated by ATP to form Tyr-AMP and then transferred to the acceptor end of tRNA(Tyr). This Yersinia enterocolitica serotype O:8 / biotype 1B (strain NCTC 13174 / 8081) protein is Tyrosine--tRNA ligase.